Consider the following 628-residue polypeptide: MTKFDHHFDYVKISLASPSKIRSWGERTLPNGQIVGEVTKPETINYRTLKPEMDGLFCERIFGPVKDWECHCGKYKRFRYKGVVCERCGVEVTESKVRRHRMAYIELAAPVTHVWYLKGTTSYIALALDLTVKDLEKIVYFHSYVVINPGNYHKLNYKQLLEGYEWRNLEEKLSSHSSNIFGIEVGIGAEAIYKLLDNINLQNTVEILREESLRPPKLFKNPSTKFNKKMKRLRLLENFLATGANPSWMVLSVIPVIPPDLRPMVQLDGGRFATADLNEFYRRIINRNNRLARLKAILAPEIIIRNEKRMLQEAVDSLMDNGRRGRTVIGANNRPLKSLSDIIEGKQGRFRQNLLGKRVDYSGRSVIVVGPNLKLHQCGLPKEMALELFQPFVIHRLILQGLVNNIKAAKKIIQRNEVVVWTVLQEVIYGHPVLLNRAPTLHRLGIQAFEPILVEGRAIKLHPLVCPAFNADFDGDQMAVHVPLSLEAQAEARLLMLAPHNFLSPATGQPILMPSQDMVLGCYYLTTYNPAAISDSSHYFSNLDDALMAYQQNNITLHSLVWVRFSGLVNDSSNQMVISSKLNIDGTITKIFSDRIVKYDNDGQMVVQYIRTTAGRILFNKAIRESLL.

Zn(2+) contacts are provided by Cys70, Cys72, Cys85, and Cys88. Residues Asp472, Asp474, and Asp476 each contribute to the Mg(2+) site.

This sequence belongs to the RNA polymerase beta' chain family. RpoC1 subfamily. In terms of assembly, in plastids the minimal PEP RNA polymerase catalytic core is composed of four subunits: alpha, beta, beta', and beta''. When a (nuclear-encoded) sigma factor is associated with the core the holoenzyme is formed, which can initiate transcription. Mg(2+) is required as a cofactor. Requires Zn(2+) as cofactor.

The protein localises to the plastid. It is found in the chloroplast. It catalyses the reaction RNA(n) + a ribonucleoside 5'-triphosphate = RNA(n+1) + diphosphate. Its function is as follows. DNA-dependent RNA polymerase catalyzes the transcription of DNA into RNA using the four ribonucleoside triphosphates as substrates. This Gracilaria tenuistipitata var. liui (Red alga) protein is DNA-directed RNA polymerase subunit beta'.